The chain runs to 98 residues: Large ribosomal subunit protein uL23 (98 aa).

Belongs to the universal ribosomal protein uL23 family. As to quaternary structure, part of the 50S ribosomal subunit. Contacts protein L29, and trigger factor when it is bound to the ribosome.

Its function is as follows. One of the early assembly proteins it binds 23S rRNA. One of the proteins that surrounds the polypeptide exit tunnel on the outside of the ribosome. Forms the main docking site for trigger factor binding to the ribosome. This chain is Large ribosomal subunit protein uL23, found in Saccharophagus degradans (strain 2-40 / ATCC 43961 / DSM 17024).